The following is a 379-amino-acid chain: RIB43A-like with coiled-coils protein 1 (379 aa).

Residues 1–21 form a disordered region; it reads MYNINQSTDTKEAAAIEARRN. A compositionally biased stretch (basic and acidic residues) spans 9–21; it reads DTKEAAAIEARRN. Coiled-coil stretches lie at residues 85-111, 161-241, and 280-304; these read ADRT…GREF, RYNL…KANL, and EQRA…QAEK.

This sequence belongs to the RIB43A family. As to quaternary structure, microtubule inner protein component of sperm flagellar doublet microtubules.

It localises to the cytoplasm. The protein resides in the cytoskeleton. It is found in the flagellum axoneme. This chain is RIB43A-like with coiled-coils protein 1 (RIBC1), found in Macaca fascicularis (Crab-eating macaque).